The following is a 91-amino-acid chain: Large ribosomal subunit protein bL27 (91 aa).

Positions 1–10 (MAQKKGGGST) are enriched in gly residues. A disordered region spans residues 1–20 (MAQKKGGGSTRNGRDSQPKM).

The protein belongs to the bacterial ribosomal protein bL27 family.

The protein is Large ribosomal subunit protein bL27 of Verminephrobacter eiseniae (strain EF01-2).